Consider the following 140-residue polypeptide: Large-conductance mechanosensitive channel (140 aa).

2 consecutive transmembrane segments (helical) span residues 11-31 (FAMR…GAFG) and 82-102 (GNFI…FLLV).

Belongs to the MscL family. Homopentamer.

It is found in the cell inner membrane. In terms of biological role, channel that opens in response to stretch forces in the membrane lipid bilayer. May participate in the regulation of osmotic pressure changes within the cell. In Parabacteroides distasonis (strain ATCC 8503 / DSM 20701 / CIP 104284 / JCM 5825 / NCTC 11152), this protein is Large-conductance mechanosensitive channel.